A 269-amino-acid polypeptide reads, in one-letter code: MRPGFSVPGESGRERPAFPLPCACGTLRPMPPPAKKPAQKKKPLPLLPDFRFEIEEGAPARLVCGVDEAGRGPLAGPVVAAAVIIDLTRCPEGLNDSKKLDAARRADLLAELADCAEIGVGIASVEEIDEINILHATMLAMTRAVASLPRAPHIALIDGNRCPPSLACASRAVIGGDALARSIAAASIVAKVTRDRMMAALAETHPGYGFEKHMGYSTPEHFDALSRLGPCAIHRRSFAPVRKMLSPGLEEGLDLVSGESVNLLIQKAY.

The RNase H type-2 domain occupies 61 to 250; it reads RLVCGVDEAG…VRKMLSPGLE (190 aa). 3 residues coordinate a divalent metal cation: aspartate 67, glutamate 68, and aspartate 158.

It belongs to the RNase HII family. Mn(2+) is required as a cofactor. Requires Mg(2+) as cofactor.

The protein resides in the cytoplasm. The enzyme catalyses Endonucleolytic cleavage to 5'-phosphomonoester.. Its function is as follows. Endonuclease that specifically degrades the RNA of RNA-DNA hybrids. The polypeptide is Ribonuclease HII (Parvibaculum lavamentivorans (strain DS-1 / DSM 13023 / NCIMB 13966)).